Reading from the N-terminus, the 316-residue chain is Acetyl-coenzyme A carboxylase carboxyl transferase subunit alpha (316 aa).

The CoA carboxyltransferase C-terminal domain maps to 40 to 293 (LERRSKDALR…GETIENGFRE (254 aa)).

It belongs to the AccA family. Acetyl-CoA carboxylase is a heterohexamer composed of biotin carboxyl carrier protein (AccB), biotin carboxylase (AccC) and two subunits each of ACCase subunit alpha (AccA) and ACCase subunit beta (AccD).

Its subcellular location is the cytoplasm. It catalyses the reaction N(6)-carboxybiotinyl-L-lysyl-[protein] + acetyl-CoA = N(6)-biotinyl-L-lysyl-[protein] + malonyl-CoA. The protein operates within lipid metabolism; malonyl-CoA biosynthesis; malonyl-CoA from acetyl-CoA: step 1/1. In terms of biological role, component of the acetyl coenzyme A carboxylase (ACC) complex. First, biotin carboxylase catalyzes the carboxylation of biotin on its carrier protein (BCCP) and then the CO(2) group is transferred by the carboxyltransferase to acetyl-CoA to form malonyl-CoA. The polypeptide is Acetyl-coenzyme A carboxylase carboxyl transferase subunit alpha (Chelativorans sp. (strain BNC1)).